The primary structure comprises 194 residues: HTH-type transcriptional regulator BetI (194 aa).

The HTH tetR-type domain maps to 8 to 68; sequence PLRRRELIDA…ATMRHLLREL (61 aa). Residues 31 to 50 constitute a DNA-binding region (H-T-H motif); sequence TVAQIAHEAGVSPALAHHYF.

It participates in amine and polyamine biosynthesis; betaine biosynthesis via choline pathway [regulation]. Its function is as follows. Repressor involved in the biosynthesis of the osmoprotectant glycine betaine. It represses transcription of the choline transporter BetT and the genes of BetAB involved in the synthesis of glycine betaine. In Brucella anthropi (strain ATCC 49188 / DSM 6882 / CCUG 24695 / JCM 21032 / LMG 3331 / NBRC 15819 / NCTC 12168 / Alc 37) (Ochrobactrum anthropi), this protein is HTH-type transcriptional regulator BetI.